The chain runs to 145 residues: Mannitol-specific phosphotransferase enzyme IIA component (145 aa).

The PTS EIIA type-2 domain maps to T4 to V143. H64 acts as the Tele-phosphohistidine intermediate in catalysis. H64 is subject to Phosphohistidine; by HPr.

It is found in the cytoplasm. Its function is as follows. The phosphoenolpyruvate-dependent sugar phosphotransferase system (sugar PTS), a major carbohydrate active transport system, catalyzes the phosphorylation of incoming sugar substrates concomitantly with their translocation across the cell membrane. The enzyme II CmtAB PTS system is involved in D-mannitol transport. In Halalkalibacterium halodurans (strain ATCC BAA-125 / DSM 18197 / FERM 7344 / JCM 9153 / C-125) (Bacillus halodurans), this protein is Mannitol-specific phosphotransferase enzyme IIA component (mtlF).